The primary structure comprises 98 residues: MANFVLNAQARAEDKQGKGASRRLRRESLVPAIIYGGNAEPVAVTLELRELVKALESNAFFEEVVEIKVGDKVENVKIQALQRHPAKNTPMHADFKRA.

Residues 1–23 (MANFVLNAQARAEDKQGKGASRR) are disordered.

Belongs to the bacterial ribosomal protein bL25 family. Part of the 50S ribosomal subunit; part of the 5S rRNA/L5/L18/L25 subcomplex. Contacts the 5S rRNA. Binds to the 5S rRNA independently of L5 and L18.

This is one of the proteins that binds to the 5S RNA in the ribosome where it forms part of the central protuberance. This chain is Large ribosomal subunit protein bL25, found in Acinetobacter baumannii (strain ATCC 17978 / DSM 105126 / CIP 53.77 / LMG 1025 / NCDC KC755 / 5377).